The chain runs to 336 residues: DNA-directed RNA polymerase subunit alpha (336 aa).

The tract at residues 1–232 (MIQKNWQELI…DQLGLFVNFE (232 aa)) is alpha N-terminal domain (alpha-NTD). The tract at residues 248 to 336 (FNPALLKKVD…ELAKRYEDQY (89 aa)) is alpha C-terminal domain (alpha-CTD).

This sequence belongs to the RNA polymerase alpha chain family. As to quaternary structure, homodimer. The RNAP catalytic core consists of 2 alpha, 1 beta, 1 beta' and 1 omega subunit. When a sigma factor is associated with the core the holoenzyme is formed, which can initiate transcription.

It catalyses the reaction RNA(n) + a ribonucleoside 5'-triphosphate = RNA(n+1) + diphosphate. In terms of biological role, DNA-dependent RNA polymerase catalyzes the transcription of DNA into RNA using the four ribonucleoside triphosphates as substrates. This chain is DNA-directed RNA polymerase subunit alpha, found in Chelativorans sp. (strain BNC1).